We begin with the raw amino-acid sequence, 253 residues long: 3-deoxy-manno-octulosonate cytidylyltransferase (253 aa).

It belongs to the KdsB family.

The protein resides in the cytoplasm. It catalyses the reaction 3-deoxy-alpha-D-manno-oct-2-ulosonate + CTP = CMP-3-deoxy-beta-D-manno-octulosonate + diphosphate. It participates in nucleotide-sugar biosynthesis; CMP-3-deoxy-D-manno-octulosonate biosynthesis; CMP-3-deoxy-D-manno-octulosonate from 3-deoxy-D-manno-octulosonate and CTP: step 1/1. The protein operates within bacterial outer membrane biogenesis; lipopolysaccharide biosynthesis. Its function is as follows. Activates KDO (a required 8-carbon sugar) for incorporation into bacterial lipopolysaccharide in Gram-negative bacteria. The polypeptide is 3-deoxy-manno-octulosonate cytidylyltransferase (Haemophilus ducreyi (strain 35000HP / ATCC 700724)).